The sequence spans 398 residues: 1-deoxy-D-xylulose 5-phosphate reductoisomerase (398 aa).

Residues Thr11, Gly12, Ser13, Ile14, Arg38, Asn39, and Asn125 each coordinate NADPH. Lys126 lines the 1-deoxy-D-xylulose 5-phosphate pocket. Residue Glu127 participates in NADPH binding. Residue Asp151 participates in Mn(2+) binding. Positions 152, 153, 179, and 202 each coordinate 1-deoxy-D-xylulose 5-phosphate. Glu153 contributes to the Mn(2+) binding site. Gly208 is a binding site for NADPH. 1-deoxy-D-xylulose 5-phosphate is bound by residues Ser215, Asn220, Lys221, and Glu224. Position 224 (Glu224) interacts with Mn(2+).

It belongs to the DXR family. Mg(2+) is required as a cofactor. The cofactor is Mn(2+).

It catalyses the reaction 2-C-methyl-D-erythritol 4-phosphate + NADP(+) = 1-deoxy-D-xylulose 5-phosphate + NADPH + H(+). It functions in the pathway isoprenoid biosynthesis; isopentenyl diphosphate biosynthesis via DXP pathway; isopentenyl diphosphate from 1-deoxy-D-xylulose 5-phosphate: step 1/6. Functionally, catalyzes the NADPH-dependent rearrangement and reduction of 1-deoxy-D-xylulose-5-phosphate (DXP) to 2-C-methyl-D-erythritol 4-phosphate (MEP). The polypeptide is 1-deoxy-D-xylulose 5-phosphate reductoisomerase (Burkholderia lata (strain ATCC 17760 / DSM 23089 / LMG 22485 / NCIMB 9086 / R18194 / 383)).